The following is a 698-amino-acid chain: MPEEASLPPAKRFRPGSCPPGRRVVMLLTAGGGGGAGGGRRQTPPLAQPSASPYREALELQRRSLPIFRARGQLLAQLRNLDNAVLIGETGSGKTTQIPQYLYEGGISRQGIIAVTQPRRVAAISLATRVSDEKRTELGKLVGYTVRFEDVTSEDTRIKFLTDGMLLREAISDSLLRKYSCVILDEAHERTIHTDVLFGVVKTAQKRRKELGKLPLKVIVMSATMDVDLFSQYFNRAPVLYLEGRQHPIQIFYTKQPQQDYLHAALVSVFQIHQEAPASQDILVFLTGQEEIEAMSKTCRDIARHLPDGCPSMLVLPLYASLPYSQQLRVFQGAPKGYRKVIISTNIAETSITITGIKYVVDTGMVKAKKYNPDSGLEVLAVQRVSKTQAWQRTGRAGREDSGICYRLYTEDEFEKFEKMTVPEIQRCNLASVILQLLAMKVPNVLTFDFMSKPSPDHIEAAIAQLDLLGALEHKDDQLTLTPIGRKMAAFPLEPRFAKTILLSSKFHCTEEILTIVSLLSVDSVLYNPPARRDEVQSVRKKFISSEGDHITLLNIYRTFKNIGGNKDWCKENFVNSKNMLLVAEVRAQLREICLKMSMPIMSSRGDMESVRRCMAHSLFMNTAELQTDGTYATTDTHQPVAIHPSSVLFHCKPACVVYTSLLYTNKCYMRDLCVVDAEWLYEAAPDYFRRKLRTARN.

Disordered regions lie at residues 1 to 20 and 29 to 50; these read MPEEASLPPAKRFRPGSCPP and TAGGGGGAGGGRRQTPPLAQPS. The segment at 1-71 is required for nucleolar location; that stretch reads MPEEASLPPA…RRSLPIFRAR (71 aa). Positions 30–40 are enriched in gly residues; sequence AGGGGGAGGGR. The Helicase ATP-binding domain occupies 75–243; sequence LAQLRNLDNA…FNRAPVLYLE (169 aa). Position 88–95 (88–95) interacts with ATP; it reads GETGSGKT. The DEAH box motif lies at 185 to 188; it reads DEAH. A Helicase C-terminal domain is found at 271-441; that stretch reads QIHQEAPASQ…SVILQLLAMK (171 aa). An HA2; required for interaction with EIF3G and RPL26 region spans residues 462 to 553; the sequence is AIAQLDLLGA…ISSEGDHITL (92 aa). The short motif at 536-550 is the Critical for rDNA-binding element; that stretch reads VQSVRKKFISSEGDH.

The protein belongs to the DEAD box helicase family. DEAH subfamily. In terms of assembly, interacts with UBTF. Interacts with DDX3X, EIF3G and EIF3H; the interaction is independent of RNA. Interacts (via HA2 region and Helicase C-terminal domain) with the components of the large ribosomal subunit RPL3, RPL7, RPL26 and RPL27. Binds to mRNA. Interacts (via the helicase C-terminal domain) with MAVS. Binds to double-stranded RNA (via the helicase C-terminal domain). Ubiquitinated, leading to its degradation by the proteasome. Deubiquitinated by USP36.

The protein resides in the nucleus. It is found in the nucleolus. The protein localises to the nucleoplasm. Its subcellular location is the cytoplasm. It localises to the inflammasome. The enzyme catalyses ATP + H2O = ADP + phosphate + H(+). In terms of biological role, implicated in nucleolar organization, ribosome biogenesis, protein synthesis and cytoplasmic dsRNA sensing. Stimulates RNA polymerase I transcription of the 47S precursor rRNA. Associates with ribosomal DNA (rDNA) loci where it is involved in POLR1A recruitment. In the cytoplasm, promotes elongation-competent 80S ribosome assembly at the late stage of mRNA translation initiation. Senses cytosolic dsRNA mediating NLRP3 inflammasome formation in macrophages and type I interferon production in myeloid dendritic cells. Required for NLRP3 activation induced by viral dsRNA and bacterial RNA. In dendritic cells, required for induction of type I interferon production induced by cytoplasmic dsRNA via the activation of MAPK and NF-kappa-B signaling pathways. This chain is ATP-dependent RNA helicase DHX33, found in Mus musculus (Mouse).